Consider the following 272-residue polypeptide: Large ribosomal subunit protein uL4 (272 aa).

Belongs to the universal ribosomal protein uL4 family. In terms of assembly, part of the 50S ribosomal subunit.

Functionally, one of the primary rRNA binding proteins, this protein initially binds near the 5'-end of the 23S rRNA. It is important during the early stages of 50S assembly. It makes multiple contacts with different domains of the 23S rRNA in the assembled 50S subunit and ribosome. Forms part of the polypeptide exit tunnel. The sequence is that of Large ribosomal subunit protein uL4 from Aeropyrum pernix (strain ATCC 700893 / DSM 11879 / JCM 9820 / NBRC 100138 / K1).